Here is a 309-residue protein sequence, read N- to C-terminus: uncharacterized protein (309 aa).

The span at 1 to 16 shows a compositional bias: basic residues; sequence MAGNSRRRGAVRKAGT. The disordered stretch occupies residues 1 to 70; the sequence is MAGNSRRRGA…AKRTEETETV (70 aa). S-adenosyl-L-methionine contacts are provided by glycine 261, isoleucine 281, and leucine 290.

It belongs to the class IV-like SAM-binding methyltransferase superfamily. RNA methyltransferase TrmH family.

This is an uncharacterized protein from Mycolicibacterium paratuberculosis (strain ATCC BAA-968 / K-10) (Mycobacterium paratuberculosis).